The primary structure comprises 741 residues: DNA ligase (741 aa).

NAD(+) contacts are provided by residues Asp-78 to Asp-82, Ser-127 to Leu-128, and Glu-161. Catalysis depends on Lys-163, which acts as the N6-AMP-lysine intermediate. NAD(+) is bound by residues Arg-184, Glu-219, Lys-335, and Lys-359. Residues Cys-464, Cys-467, Cys-482, and Cys-488 each contribute to the Zn(2+) site. Residues Val-662 to Ala-741 enclose the BRCT domain.

This sequence belongs to the NAD-dependent DNA ligase family. LigA subfamily. It depends on Mg(2+) as a cofactor. Requires Mn(2+) as cofactor.

The enzyme catalyses NAD(+) + (deoxyribonucleotide)n-3'-hydroxyl + 5'-phospho-(deoxyribonucleotide)m = (deoxyribonucleotide)n+m + AMP + beta-nicotinamide D-nucleotide.. DNA ligase that catalyzes the formation of phosphodiester linkages between 5'-phosphoryl and 3'-hydroxyl groups in double-stranded DNA using NAD as a coenzyme and as the energy source for the reaction. It is essential for DNA replication and repair of damaged DNA. The sequence is that of DNA ligase from Dinoroseobacter shibae (strain DSM 16493 / NCIMB 14021 / DFL 12).